A 429-amino-acid polypeptide reads, in one-letter code: UDP-N-acetylglucosamine 1-carboxyvinyltransferase (429 aa).

Position 22–23 (22–23 (KN)) interacts with phosphoenolpyruvate. Arg-102 contacts UDP-N-acetyl-alpha-D-glucosamine. Cys-126 functions as the Proton donor in the catalytic mechanism. Residue Cys-126 is modified to 2-(S-cysteinyl)pyruvic acid O-phosphothioketal. UDP-N-acetyl-alpha-D-glucosamine-binding positions include 131 to 135 (RPVDL), Asp-316, and Ile-338.

Belongs to the EPSP synthase family. MurA subfamily.

It localises to the cytoplasm. It carries out the reaction phosphoenolpyruvate + UDP-N-acetyl-alpha-D-glucosamine = UDP-N-acetyl-3-O-(1-carboxyvinyl)-alpha-D-glucosamine + phosphate. The protein operates within cell wall biogenesis; peptidoglycan biosynthesis. Cell wall formation. Adds enolpyruvyl to UDP-N-acetylglucosamine. The sequence is that of UDP-N-acetylglucosamine 1-carboxyvinyltransferase from Methylobacterium nodulans (strain LMG 21967 / CNCM I-2342 / ORS 2060).